The sequence spans 970 residues: Translation initiation factor IF-2 (970 aa).

Disordered regions lie at residues 54-270 (KILA…TATQ) and 328-348 (DKRRGRTPGRPMSEEQAKSLS). Over residues 87–96 (QEAQPVEAQP) the composition is skewed to low complexity. Polar residues predominate over residues 98 to 112 (YEEQPSYEEQPSYEE). The span at 121–149 (EVAAEAAPEPVEEPASSPEGGAPAGGAEP) shows a compositional bias: low complexity. Pro residues-rich tracts occupy residues 150–160 (QPAPEAPPPSA) and 168–182 (PSAPPSPAVRPPAPS). Residues 183 to 253 (VPAGAQPPGA…PHGPGAQPGQ (71 aa)) show a composition bias toward low complexity. Positions 469–638 (IRPPVVTVMG…ALQSEVLELK (170 aa)) constitute a tr-type G domain. A G1 region spans residues 478–485 (GHVDHGKT). Residue 478 to 485 (GHVDHGKT) participates in GTP binding. The segment at 503 to 507 (GITQH) is G2. Residues 524–527 (DTPG) are G3. Residues 524–528 (DTPGH) and 578–581 (NKID) each bind GTP. The tract at residues 578-581 (NKID) is G4. A G5 region spans residues 614–616 (SAR).

This sequence belongs to the TRAFAC class translation factor GTPase superfamily. Classic translation factor GTPase family. IF-2 subfamily.

The protein localises to the cytoplasm. One of the essential components for the initiation of protein synthesis. Protects formylmethionyl-tRNA from spontaneous hydrolysis and promotes its binding to the 30S ribosomal subunits. Also involved in the hydrolysis of GTP during the formation of the 70S ribosomal complex. This is Translation initiation factor IF-2 from Anaeromyxobacter sp. (strain Fw109-5).